The primary structure comprises 105 residues: Large ribosomal subunit protein bL21 (105 aa).

It belongs to the bacterial ribosomal protein bL21 family. In terms of assembly, part of the 50S ribosomal subunit. Contacts protein L20.

Functionally, this protein binds to 23S rRNA in the presence of protein L20. The protein is Large ribosomal subunit protein bL21 of Aliarcobacter butzleri (strain RM4018) (Arcobacter butzleri).